We begin with the raw amino-acid sequence, 144 residues long: Cysteine desulfuration protein SufE (144 aa).

The Cysteine persulfide intermediate role is filled by C51.

The protein belongs to the SufE family. In terms of assembly, homodimer. Interacts with SufS.

Its subcellular location is the cytoplasm. Its pathway is cofactor biosynthesis; iron-sulfur cluster biosynthesis. Functionally, participates in cysteine desulfuration mediated by SufS. Cysteine desulfuration mobilizes sulfur from L-cysteine to yield L-alanine and constitutes an essential step in sulfur metabolism for biosynthesis of a variety of sulfur-containing biomolecules. Functions as a sulfur acceptor for SufS, by mediating the direct transfer of the sulfur atom from the S-sulfanylcysteine of SufS, an intermediate product of cysteine desulfuration process. The chain is Cysteine desulfuration protein SufE from Wigglesworthia glossinidia brevipalpis.